The chain runs to 317 residues: Dehydrogenase/reductase SDR family member 12 (317 aa).

2 residues coordinate NAD(+): Ser-50 and Ile-52. Ser-175 lines the substrate pocket. 3 residues coordinate NAD(+): Tyr-201, Lys-205, and Thr-234. The active-site Proton acceptor is Tyr-201.

This sequence belongs to the short-chain dehydrogenases/reductases (SDR) family.

Putative oxidoreductase. This chain is Dehydrogenase/reductase SDR family member 12 (DHRS12), found in Bos taurus (Bovine).